A 506-amino-acid polypeptide reads, in one-letter code: Maturase K (506 aa).

Belongs to the intron maturase 2 family. MatK subfamily.

Its subcellular location is the plastid. It is found in the chloroplast. Functionally, usually encoded in the trnK tRNA gene intron. Probably assists in splicing its own and other chloroplast group II introns. This Empetrum nigrum (Black crowberry) protein is Maturase K.